The sequence spans 178 residues: Large ribosomal subunit protein uL6 (178 aa).

This sequence belongs to the universal ribosomal protein uL6 family. In terms of assembly, part of the 50S ribosomal subunit.

Functionally, this protein binds to the 23S rRNA, and is important in its secondary structure. It is located near the subunit interface in the base of the L7/L12 stalk, and near the tRNA binding site of the peptidyltransferase center. This Campylobacter jejuni subsp. doylei (strain ATCC BAA-1458 / RM4099 / 269.97) protein is Large ribosomal subunit protein uL6.